A 287-amino-acid chain; its full sequence is NAD kinase (287 aa).

Aspartate 56 (proton acceptor) is an active-site residue. Residues 56–57 (DG), arginine 61, 128–129 (ND), and aspartate 156 each bind NAD(+).

The protein belongs to the NAD kinase family. It depends on a divalent metal cation as a cofactor.

The protein resides in the cytoplasm. It carries out the reaction NAD(+) + ATP = ADP + NADP(+) + H(+). Functionally, involved in the regulation of the intracellular balance of NAD and NADP, and is a key enzyme in the biosynthesis of NADP. Catalyzes specifically the phosphorylation on 2'-hydroxyl of the adenosine moiety of NAD to yield NADP. In Thermomicrobium roseum (strain ATCC 27502 / DSM 5159 / P-2), this protein is NAD kinase.